The primary structure comprises 531 residues: Importin subunit alpha-2 (531 aa).

Residues 1-10 (MTLTETSLSH) are compositionally biased toward polar residues. Residues 1–88 (MTLTETSLSH…ISHQQSSTRL (88 aa)) form a disordered region. The 63-residue stretch at 5 to 67 (ETSLSHNAEE…RNIVDVDEGG (63 aa)) folds into the IBB domain. Basic and acidic residues-rich tracts occupy residues 11-20 (NAEEGKDEGG) and 29-50 (TKHE…KQKG). Residues 62 to 75 (DVDEGGNSESELEE) show a composition bias toward acidic residues. ARM repeat units follow at residues 122-161 (NPPI…NIVS), 164-203 (TEQT…NIAG), 250-290 (KNPH…YLTD), 293-331 (DEQI…NVAT), 334-374 (DSLT…NIIA), 377-416 (QKQI…NLAQ), and 420-459 (NRQV…TLML). Positions 511-531 (DDAGEKESHENADPQDNKWSF) are disordered. Residues 515–531 (EKESHENADPQDNKWSF) are compositionally biased toward basic and acidic residues.

Belongs to the importin alpha family. In terms of assembly, forms a complex with an importin beta subunit. Interacts with akir-1. In terms of tissue distribution, germline tissues. Expressed exclusively in germ line cells from the early embryonic through adult stages.

Its subcellular location is the cytoplasm. The protein localises to the nucleus. The protein resides in the nucleus envelope. Nuclear transport receptor that mediates nuclear import of proteins, and which is involved in sister chromatid cohesion. Binds specifically and directly to substrates containing either a simple or bipartite nuclear localization signals (NLS) motif. Promotes docking of import substrates to the nuclear envelope. Together with akir-1 adapter, required for the import and load of cohesin complex proteins in meiotic nuclei. This chain is Importin subunit alpha-2, found in Caenorhabditis elegans.